Reading from the N-terminus, the 393-residue chain is Putative mitochondrial cysteine synthase (393 aa).

A helical transmembrane segment spans residues 12 to 31 (LAWRECISIASVLIGAYASY). K86 is subject to N6-(pyridoxal phosphate)lysine. Pyridoxal 5'-phosphate contacts are provided by residues 230–234 (GTGGT) and S338.

Belongs to the cysteine synthase/cystathionine beta-synthase family. Requires pyridoxal 5'-phosphate as cofactor.

Its subcellular location is the mitochondrion. It is found in the mitochondrion outer membrane. The catalysed reaction is O-acetyl-L-serine + hydrogen sulfide = L-cysteine + acetate. Functionally, putative cysteine synthase that catalyzes the conversion of O-acetyl-L-serine (OAS) into cysteine, the last step in the cysteine biosynthesis pathway. However, this CS-like protein is unlikely to function in cysteine biosynthesis. It seems that in S.cerevisiae cysteine biosynthesis occurs exclusively through the cystathionine pathway and not via direct incorporation of sulfur into OAS. The chain is Putative mitochondrial cysteine synthase from Saccharomyces cerevisiae (strain ATCC 204508 / S288c) (Baker's yeast).